Here is a 56-residue protein sequence, read N- to C-terminus: Turripeptide XIV-01 (56 aa).

The N-terminal stretch at 1 to 21 (MRFHVLLTVALLLTSLMSIEA) is a signal peptide. A propeptide spanning residues 22 to 30 (KPVNGAEME) is cleaved from the precursor.

Post-translationally, contains 2 disulfide bonds. Expressed by the venom duct.

The protein resides in the secreted. The protein is Turripeptide XIV-01 of Gemmula speciosa (Splendid gem-turris).